A 417-amino-acid chain; its full sequence is MQDIGKCARSASRAMARASSEQKNQALLHIAKVVRQKSEEIQQVNQVDVERAKVNGQDAAFIDRLTMTPKTIETMALGLEQIVLLDDPIGKIGTLKKQASGIELGQMRVPLGVIGIIYESRPNVTIDAAALCLKSGNAVILRGGSEAIDSNTLLAQIIQEGLAAAGLPKDAVQVVTITDRAAVGEMITMTQYIDVIVPRGGKSLIARLMAEARVPMIKHLDGICHTYIDADADIAMAIKVCDNAKTQRYAPCNAMETLLVNRDIAPKVLPSLCKVYQDKGVELRVDALTRQTLEQNGFQNLVDATEADWQTEYLAPILSIKTVADIDEAMNHIEHYGSKHTDAIITNNKAQADRFLREVDSASVMVNASTRFADGFEYGLGAEIGISNDKLHARGPVGLDGLTSLKYVVLGHGEIRT.

This sequence belongs to the gamma-glutamyl phosphate reductase family.

The protein localises to the cytoplasm. The enzyme catalyses L-glutamate 5-semialdehyde + phosphate + NADP(+) = L-glutamyl 5-phosphate + NADPH + H(+). It functions in the pathway amino-acid biosynthesis; L-proline biosynthesis; L-glutamate 5-semialdehyde from L-glutamate: step 2/2. Functionally, catalyzes the NADPH-dependent reduction of L-glutamate 5-phosphate into L-glutamate 5-semialdehyde and phosphate. The product spontaneously undergoes cyclization to form 1-pyrroline-5-carboxylate. The sequence is that of Gamma-glutamyl phosphate reductase from Polynucleobacter asymbioticus (strain DSM 18221 / CIP 109841 / QLW-P1DMWA-1) (Polynucleobacter necessarius subsp. asymbioticus).